Consider the following 237-residue polypeptide: Proteasome subunit alpha type-5-B (237 aa).

Residue methionine 1 is modified to N-acetylmethionine. Residues lysine 43, lysine 66, and lysine 185 each participate in a glycyl lysine isopeptide (Lys-Gly) (interchain with G-Cter in ubiquitin) cross-link.

The protein belongs to the peptidase T1A family. Component of the 20S core complex of the 26S proteasome. The 26S proteasome is composed of a core protease (CP), known as the 20S proteasome, capped at one or both ends by the 19S regulatory particle (RP/PA700). The 20S proteasome core is composed of 28 subunits that are arranged in four stacked rings, resulting in a barrel-shaped structure. The two end rings are each formed by seven alpha subunits, and the two central rings are each formed by seven beta subunits. The catalytic chamber with the active sites is on the inside of the barrel.

The protein resides in the cytoplasm. It is found in the nucleus. The proteasome is a multicatalytic proteinase complex which is characterized by its ability to cleave peptides with Arg, Phe, Tyr, Leu, and Glu adjacent to the leaving group at neutral or slightly basic pH. The proteasome has an ATP-dependent proteolytic activity. The sequence is that of Proteasome subunit alpha type-5-B (PAE2) from Arabidopsis thaliana (Mouse-ear cress).